Reading from the N-terminus, the 280-residue chain is Alpha-methyl-mannoside-specific lectin (280 aa).

A signal peptide spans 1-26; sequence MAISKKILPLLSIATIFLLLLNKAHS. A carbohydrate contacts are provided by Asp-114 and Gly-134. Mn(2+) contacts are provided by Glu-156 and Asp-158. Residues Asp-158 and Phe-160 each contribute to the Ca(2+) site. The a carbohydrate site is built by Ser-165 and Asn-166. Residues Asn-166 and Asp-169 each contribute to the Ca(2+) site. Mn(2+)-binding residues include Asp-169 and His-174. Gly-248 and Gln-250 together coordinate a carbohydrate.

This sequence belongs to the leguminous lectin family. Homodimer. Post-translationally, glycosylated.

In terms of biological role, alpha-methyl-D-mannoside-specific lectin. Has hemagglutinating activity towards rabbit erythrocytes. Binds to cytokinins and significantly inhibits physiological effects of cytokinin activity such as cotyledon expansion and delayed leaf senescence. The protein is Alpha-methyl-mannoside-specific lectin of Arachis hypogaea (Peanut).